A 474-amino-acid chain; its full sequence is Light-independent protochlorophyllide reductase subunit N (474 aa).

[4Fe-4S] cluster is bound by residues C22, C47, and C107.

It belongs to the BchN/ChlN family. As to quaternary structure, protochlorophyllide reductase is composed of three subunits; ChlL, ChlN and ChlB. Forms a heterotetramer of two ChlB and two ChlN subunits. The cofactor is [4Fe-4S] cluster.

It is found in the plastid. It localises to the chloroplast. The catalysed reaction is chlorophyllide a + oxidized 2[4Fe-4S]-[ferredoxin] + 2 ADP + 2 phosphate = protochlorophyllide a + reduced 2[4Fe-4S]-[ferredoxin] + 2 ATP + 2 H2O. Its pathway is porphyrin-containing compound metabolism; chlorophyll biosynthesis (light-independent). Functionally, component of the dark-operative protochlorophyllide reductase (DPOR) that uses Mg-ATP and reduced ferredoxin to reduce ring D of protochlorophyllide (Pchlide) to form chlorophyllide a (Chlide). This reaction is light-independent. The NB-protein (ChlN-ChlB) is the catalytic component of the complex. This is Light-independent protochlorophyllide reductase subunit N from Physcomitrium patens (Spreading-leaved earth moss).